A 454-amino-acid polypeptide reads, in one-letter code: Transcription factor efuD (454 aa).

Residues 4 to 111 (AKELIRITAR…NYHRAIDSIK (108 aa)) enclose the HTH TFE/IIEalpha-type domain. Residues 327–454 (LRTDDDGAMD…DEDELEFEDI (128 aa)) are disordered. Acidic residues predominate over residues 353–372 (DQDEEEEEEDDDDDEFEDVD). The span at 387–401 (SVSTPATSAQVSSTA) shows a compositional bias: polar residues. Over residues 423–437 (APAAAASSQAAAAES) the composition is skewed to low complexity. Acidic residues predominate over residues 442–454 (SDEDEDELEFEDI).

The protein belongs to the TFIIE alpha subunit family.

It localises to the nucleus. Functionally, transcription factor; part of the gene cluster that mediates the biosynthesis of enfumafungin, a glycosylated fernene-type triterpenoid with potent antifungal activity, mediated by its interaction with beta-1,3-glucan synthase and the fungal cell wall. Is possibly responsible for the transcription regulation of one or more genes within the gene cluster. This Hormonema carpetanum protein is Transcription factor efuD.